Consider the following 327-residue polypeptide: DNA-directed RNA polymerase subunit alpha (327 aa).

The alpha N-terminal domain (alpha-NTD) stretch occupies residues 1–233; it reads MVREKVKVST…NLFIPFLHVE (233 aa). The alpha C-terminal domain (alpha-CTD) stretch occupies residues 266-327; it reads EQGFQYIFID…KKILDILEKK (62 aa).

Belongs to the RNA polymerase alpha chain family. In terms of assembly, in plastids the minimal PEP RNA polymerase catalytic core is composed of four subunits: alpha, beta, beta', and beta''. When a (nuclear-encoded) sigma factor is associated with the core the holoenzyme is formed, which can initiate transcription.

It is found in the plastid. Its subcellular location is the chloroplast. The enzyme catalyses RNA(n) + a ribonucleoside 5'-triphosphate = RNA(n+1) + diphosphate. In terms of biological role, DNA-dependent RNA polymerase catalyzes the transcription of DNA into RNA using the four ribonucleoside triphosphates as substrates. This is DNA-directed RNA polymerase subunit alpha from Barbarea verna (Land cress).